The chain runs to 133 residues: Exosome complex protein C1739.07 (133 aa).

A disordered region spans residues 96-133 (VNPKTEAVNTSNAAISSSSSNRPKVAKDAATRIIKHHT). Low complexity predominate over residues 102-116 (AVNTSNAAISSSSSN).

Belongs to the C1D family. Component of the exosome multienzyme ribonuclease complex. Interacts with cut3.

It localises to the cytoplasm. The protein resides in the nucleus. In terms of biological role, required for exosome-dependent processing of pre-rRNA and small nucleolar RNA (snRNA) precursors. Involved in processing of 35S pre-rRNA at the A0, A1 and A2 sites. This chain is Exosome complex protein C1739.07, found in Schizosaccharomyces pombe (strain 972 / ATCC 24843) (Fission yeast).